The following is a 434-amino-acid chain: Monodehydroascorbate reductase 1, peroxisomal (434 aa).

FAD-binding positions include 13-16 (GGVS), Glu-40, Arg-47, Lys-52, Ile-95, and 146-147 (RE). NAD(+) is bound by residues 171 to 177 (GGYIGLE), Glu-195, Arg-201, and Gly-260. 173-177 (YIGLE) provides a ligand contact to NADP(+). Arg-201 and Gly-260 together coordinate NADP(+). Asp-297 contributes to the FAD binding site. 313-314 (EH) contacts NAD(+). Position 313–314 (313–314 (EH)) interacts with NADP(+). Val-315 contributes to the FAD binding site. Residue Arg-319 participates in L-ascorbate binding. Tyr-348 lines the FAD pocket. Tyr-348 serves as a coordination point for NAD(+). Tyr-348 lines the NADP(+) pocket. Arg-350 serves as a coordination point for L-ascorbate. A Phosphoserine modification is found at Ser-416.

This sequence belongs to the FAD-dependent oxidoreductase family. FAD is required as a cofactor.

The protein resides in the peroxisome matrix. It carries out the reaction 2 monodehydro-L-ascorbate radical + NADH + H(+) = 2 L-ascorbate + NAD(+). Catalyzes the conversion of monodehydroascorbate to ascorbate, oxidizing NADH in the process. The polypeptide is Monodehydroascorbate reductase 1, peroxisomal (Arabidopsis thaliana (Mouse-ear cress)).